Consider the following 302-residue polypeptide: Sulfate adenylyltransferase subunit 2 (302 aa).

This sequence belongs to the PAPS reductase family. CysD subfamily. In terms of assembly, heterodimer composed of CysD, the smaller subunit, and CysN.

It catalyses the reaction sulfate + ATP + H(+) = adenosine 5'-phosphosulfate + diphosphate. The protein operates within sulfur metabolism; hydrogen sulfide biosynthesis; sulfite from sulfate: step 1/3. Its function is as follows. With CysN forms the ATP sulfurylase (ATPS) that catalyzes the adenylation of sulfate producing adenosine 5'-phosphosulfate (APS) and diphosphate, the first enzymatic step in sulfur assimilation pathway. APS synthesis involves the formation of a high-energy phosphoric-sulfuric acid anhydride bond driven by GTP hydrolysis by CysN coupled to ATP hydrolysis by CysD. This is Sulfate adenylyltransferase subunit 2 from Salmonella schwarzengrund (strain CVM19633).